A 233-amino-acid chain; its full sequence is Large ribosomal subunit protein uL2 (233 aa).

Positions 194–233 (HPHGGGNHQHVGRPSTVGRGTPPGRKVGRLSPKRRKKYGR) are disordered. The span at 219-233 (KVGRLSPKRRKKYGR) shows a compositional bias: basic residues.

It belongs to the universal ribosomal protein uL2 family. As to quaternary structure, part of the 50S ribosomal subunit. Forms a bridge to the 30S subunit in the 70S ribosome.

Functionally, one of the primary rRNA binding proteins. Required for association of the 30S and 50S subunits to form the 70S ribosome, for tRNA binding and peptide bond formation. It has been suggested to have peptidyltransferase activity; this is somewhat controversial. Makes several contacts with the 16S rRNA in the 70S ribosome. This is Large ribosomal subunit protein uL2 from Picrophilus torridus (strain ATCC 700027 / DSM 9790 / JCM 10055 / NBRC 100828 / KAW 2/3).